The primary structure comprises 221 residues: Orotate phosphoribosyltransferase (221 aa).

Lys-26 contributes to the 5-phospho-alpha-D-ribose 1-diphosphate binding site. 34–35 (FF) provides a ligand contact to orotate. Residues 72–73 (YK), Arg-98, Lys-99, Lys-102, His-104, and 123–131 (DDVISAGTS) each bind 5-phospho-alpha-D-ribose 1-diphosphate. 2 residues coordinate orotate: Ser-127 and Arg-155.

It belongs to the purine/pyrimidine phosphoribosyltransferase family. PyrE subfamily. As to quaternary structure, homodimer. Requires Mg(2+) as cofactor.

The catalysed reaction is orotidine 5'-phosphate + diphosphate = orotate + 5-phospho-alpha-D-ribose 1-diphosphate. It participates in pyrimidine metabolism; UMP biosynthesis via de novo pathway; UMP from orotate: step 1/2. Catalyzes the transfer of a ribosyl phosphate group from 5-phosphoribose 1-diphosphate to orotate, leading to the formation of orotidine monophosphate (OMP). The polypeptide is Orotate phosphoribosyltransferase (Janthinobacterium sp. (strain Marseille) (Minibacterium massiliensis)).